A 449-amino-acid polypeptide reads, in one-letter code: tRNA-2-methylthio-N(6)-dimethylallyladenosine synthase (449 aa).

The 122-residue stretch at 3–124 folds into the MTTase N-terminal domain; the sequence is KMLYIKTYGC…LPTMLEKLDS (122 aa). Residues Cys-12, Cys-48, Cys-87, Cys-163, Cys-167, and Cys-170 each coordinate [4Fe-4S] cluster. In terms of domain architecture, Radical SAM core spans 149-380; the sequence is KSPTVSGLVS…QAQLMQQQLE (232 aa). Residues 383 to 447 form the TRAM domain; sequence QKLIGKVVPV…ASSLFGEVYA (65 aa).

This sequence belongs to the methylthiotransferase family. MiaB subfamily. As to quaternary structure, monomer. Requires [4Fe-4S] cluster as cofactor.

It is found in the cytoplasm. It catalyses the reaction N(6)-dimethylallyladenosine(37) in tRNA + (sulfur carrier)-SH + AH2 + 2 S-adenosyl-L-methionine = 2-methylsulfanyl-N(6)-dimethylallyladenosine(37) in tRNA + (sulfur carrier)-H + 5'-deoxyadenosine + L-methionine + A + S-adenosyl-L-homocysteine + 2 H(+). In terms of biological role, catalyzes the methylthiolation of N6-(dimethylallyl)adenosine (i(6)A), leading to the formation of 2-methylthio-N6-(dimethylallyl)adenosine (ms(2)i(6)A) at position 37 in tRNAs that read codons beginning with uridine. The polypeptide is tRNA-2-methylthio-N(6)-dimethylallyladenosine synthase (Orientia tsutsugamushi (strain Ikeda) (Rickettsia tsutsugamushi)).